The primary structure comprises 483 residues: Probable 4-aminobutyrate aminotransferase, mitochondrial (483 aa).

Gly148–Thr149 provides a ligand contact to pyridoxal 5'-phosphate. Position 204 (Arg204) interacts with substrate. Residue Lys341 is modified to N6-(pyridoxal phosphate)lysine. Thr365 serves as a coordination point for pyridoxal 5'-phosphate.

This sequence belongs to the class-III pyridoxal-phosphate-dependent aminotransferase family. Homodimer. Pyridoxal 5'-phosphate is required as a cofactor.

The protein resides in the mitochondrion matrix. It catalyses the reaction 4-aminobutanoate + 2-oxoglutarate = succinate semialdehyde + L-glutamate. The catalysed reaction is (S)-3-amino-2-methylpropanoate + 2-oxoglutarate = 2-methyl-3-oxopropanoate + L-glutamate. This Caenorhabditis elegans protein is Probable 4-aminobutyrate aminotransferase, mitochondrial (gta-1).